We begin with the raw amino-acid sequence, 100 residues long: Small ribosomal subunit protein uS14c (100 aa).

A disordered region spans residues 1–22; that stretch reads MARKGLIQRENKRQKLEQKYHS. The segment covering 7–20 has biased composition (basic and acidic residues); it reads IQRENKRQKLEQKY.

This sequence belongs to the universal ribosomal protein uS14 family. As to quaternary structure, part of the 30S ribosomal subunit.

The protein localises to the plastid. It is found in the chloroplast. In terms of biological role, binds 16S rRNA, required for the assembly of 30S particles. This is Small ribosomal subunit protein uS14c from Daucus carota (Wild carrot).